A 475-amino-acid polypeptide reads, in one-letter code: NADH-quinone oxidoreductase subunit N (475 aa).

14 helical membrane passes run 5–25 (LALP…FGVV), 32–52 (FLSC…LVVM), 71–91 (FMKI…VGYA), 99–119 (FEFP…ASSE), 121–141 (LMTL…LCAF), 155–175 (YFVL…LVYG), 193–213 (STAV…GLTF), 232–252 (PTSV…ALLL), 266–286 (WQIL…LAAI), 294–314 (LMAY…CAGT), 322–342 (LVYL…IIAM), 366–386 (ATAM…AGFF), 389–409 (MMVF…IGVV), and 439–459 (LSLS…LLVL).

This sequence belongs to the complex I subunit 2 family. In terms of assembly, NDH-1 is composed of 14 different subunits. Subunits NuoA, H, J, K, L, M, N constitute the membrane sector of the complex.

Its subcellular location is the cell inner membrane. The enzyme catalyses a quinone + NADH + 5 H(+)(in) = a quinol + NAD(+) + 4 H(+)(out). NDH-1 shuttles electrons from NADH, via FMN and iron-sulfur (Fe-S) centers, to quinones in the respiratory chain. The immediate electron acceptor for the enzyme in this species is believed to be ubiquinone. Couples the redox reaction to proton translocation (for every two electrons transferred, four hydrogen ions are translocated across the cytoplasmic membrane), and thus conserves the redox energy in a proton gradient. In Gluconacetobacter diazotrophicus (strain ATCC 49037 / DSM 5601 / CCUG 37298 / CIP 103539 / LMG 7603 / PAl5), this protein is NADH-quinone oxidoreductase subunit N.